The primary structure comprises 310 residues: p-hydroxybenzoic acid efflux pump subunit AaeA (310 aa).

Residues 12-32 form a helical membrane-spanning segment; sequence AITLVLVILAFIAIFRAWVYY.

This sequence belongs to the membrane fusion protein (MFP) (TC 8.A.1) family.

The protein resides in the cell inner membrane. Functionally, forms an efflux pump with AaeB. The sequence is that of p-hydroxybenzoic acid efflux pump subunit AaeA from Salmonella gallinarum (strain 287/91 / NCTC 13346).